The following is a 339-amino-acid chain: N-acetylmuramate/N-acetylglucosamine kinase (339 aa).

This sequence belongs to the kinase AmgK family.

It carries out the reaction N-acetyl-D-muramate + ATP = N-acetyl-alpha-D-muramate 1-phosphate + ADP + H(+). The catalysed reaction is N-acetyl-D-glucosamine + ATP = N-acetyl-alpha-D-glucosamine 1-phosphate + ADP + H(+). The protein operates within cell wall biogenesis; peptidoglycan recycling. Functionally, sugar kinase that catalyzes the ATP-dependent phosphorylation of N-acetylmuramate (MurNAc) and N-acetylglucosamine (GlcNAc) at its C1 hydroxyl group, leading to MurNAc alpha-1P and GlcNAc alpha-1P, respectively. Is involved in peptidoglycan recycling as part of a cell wall recycling pathway that bypasses de novo biosynthesis of the peptidoglycan precursor UDP-MurNAc. Plays a role in intrinsic resistance to fosfomycin, which targets the de novo synthesis of UDP-MurNAc. Is also able to use N-acetylgalactosamine (GalNAc) as a substrate, but not N-acetylmannosamine, N-deacetylated sugars or glucose. The polypeptide is N-acetylmuramate/N-acetylglucosamine kinase (Pseudomonas putida (strain ATCC 47054 / DSM 6125 / CFBP 8728 / NCIMB 11950 / KT2440)).